The chain runs to 299 residues: Ribosomal RNA small subunit methyltransferase H (299 aa).

S-adenosyl-L-methionine-binding positions include 36–38, Asp-55, Asp-103, and Gln-110; that span reads GGH. 2 stretches are compositionally biased toward basic and acidic residues: residues 268 to 282 and 289 to 299; these read KPVR…ENPR and RAAERIEKGGD. The tract at residues 268 to 299 is disordered; sequence KPVRPSEEEIRENPRARSGRLRAAERIEKGGD.

It belongs to the methyltransferase superfamily. RsmH family.

Its subcellular location is the cytoplasm. It carries out the reaction cytidine(1402) in 16S rRNA + S-adenosyl-L-methionine = N(4)-methylcytidine(1402) in 16S rRNA + S-adenosyl-L-homocysteine + H(+). Functionally, specifically methylates the N4 position of cytidine in position 1402 (C1402) of 16S rRNA. In Thermotoga sp. (strain RQ2), this protein is Ribosomal RNA small subunit methyltransferase H.